The following is a 319-amino-acid chain: Putative binding protein BAB2_1146 (319 aa).

Positions 1–22 (MKRRTFLAMSLALTFLPSVALA) are cleaved as a signal peptide.

Belongs to the bacterial solute-binding protein SsuA/TauA family. As to quaternary structure, the complex is composed of two ATP-binding proteins (BAB2_1147), two transmembrane proteins (BAB2_1148) and a solute-binding protein (BAB2_1146).

Its subcellular location is the periplasm. Probably part of an ABC transporter complex. The protein is Putative binding protein BAB2_1146 of Brucella abortus (strain 2308).